The primary structure comprises 157 residues: MNINFTLVSQAIAFSIFIWFTTKFVWPYLLRAIEERQQKIADGLAAGERGKKELELASQRSSEVLKEAKQRAGEIVIQAEKRASDIIEEAKKNARVEGEKILAGAKAEIQHEIFSARESLRQQVAGLAVQGASKILRREVNAKAHADLLASIETELK.

The chain crosses the membrane as a helical span at residues 7-29 (LVSQAIAFSIFIWFTTKFVWPYL).

The protein belongs to the ATPase B chain family. In terms of assembly, F-type ATPases have 2 components, F(1) - the catalytic core - and F(0) - the membrane proton channel. F(1) has five subunits: alpha(3), beta(3), gamma(1), delta(1), epsilon(1). F(0) has three main subunits: a(1), b(2) and c(10-14). The alpha and beta chains form an alternating ring which encloses part of the gamma chain. F(1) is attached to F(0) by a central stalk formed by the gamma and epsilon chains, while a peripheral stalk is formed by the delta and b chains.

The protein localises to the cell inner membrane. F(1)F(0) ATP synthase produces ATP from ADP in the presence of a proton or sodium gradient. F-type ATPases consist of two structural domains, F(1) containing the extramembraneous catalytic core and F(0) containing the membrane proton channel, linked together by a central stalk and a peripheral stalk. During catalysis, ATP synthesis in the catalytic domain of F(1) is coupled via a rotary mechanism of the central stalk subunits to proton translocation. Its function is as follows. Component of the F(0) channel, it forms part of the peripheral stalk, linking F(1) to F(0). The polypeptide is ATP synthase subunit b (Nitrosomonas eutropha (strain DSM 101675 / C91 / Nm57)).